The chain runs to 264 residues: uncharacterized protein (264 aa).

The N-terminal stretch at 1-22 (MGYLKKLALFISVIILGIFIIG) is a signal peptide. Residue Cys23 is the site of N-palmitoyl cysteine attachment. Residue Cys23 is the site of S-diacylglycerol cysteine attachment.

It belongs to the staphylococcal tandem lipoprotein family.

The protein localises to the cell membrane. This is an uncharacterized protein from Staphylococcus aureus (strain N315).